The following is a 1160-amino-acid chain: Carbamoyl phosphate synthase arginine-specific large chain, mitochondrial (1160 aa).

The tract at residues 81–478 (AEHEKVKKVV…SLQKALRQVD (398 aa)) is carboxyphosphate synthetic domain. 12 residues coordinate ATP: Arg-208, Arg-248, Gly-254, Gly-255, Lys-285, Leu-287, Glu-292, Gly-318, Ile-319, His-320, Gln-361, and Glu-375. Residues 212–404 (AKALNEINIP…LAYTAAKIAL (193 aa)) form the ATP-grasp 1 domain. Residues Gln-361, Glu-375, and Asn-377 each coordinate Mg(2+). The Mn(2+) site is built by Gln-361, Glu-375, and Asn-377. Residues 479–623 (PSFLGFMAMP…YTSYNASSHD (145 aa)) form an oligomerization domain region. Residues 624–1012 (IDFNEHGTMV…AYWAALQSTQ (389 aa)) are carbamoyl phosphate synthetic domain. In terms of domain architecture, ATP-grasp 2 spans 748-946 (SQILDKIGVD…FIDVATRSII (199 aa)). ATP contacts are provided by Arg-784, Lys-823, Ile-825, Glu-830, Gly-855, Val-856, His-857, Ser-858, Gln-898, and Glu-917. Mg(2+)-binding residues include Gln-898, Glu-917, and Asn-919. Residues Gln-898, Glu-917, and Asn-919 each coordinate Mn(2+). The segment at 1013-1144 (NFKIPLPGQG…PSVLSEKKEM (132 aa)) is allosteric domain. In terms of domain architecture, MGS-like spans 1014–1160 (FKIPLPGQGI…WSEWIGSHDL (147 aa)).

The protein belongs to the CarB family. As to quaternary structure, heterodimer composed of 2 chains; the small (or glutamine) chain promotes the hydrolysis of glutamine to ammonia, which is used by the large (or ammonia) chain to synthesize carbamoyl phosphate. It depends on Mg(2+) as a cofactor. The cofactor is Mn(2+).

Its subcellular location is the mitochondrion. The enzyme catalyses hydrogencarbonate + L-glutamine + 2 ATP + H2O = carbamoyl phosphate + L-glutamate + 2 ADP + phosphate + 2 H(+). It carries out the reaction hydrogencarbonate + NH4(+) + 2 ATP = carbamoyl phosphate + 2 ADP + phosphate + 2 H(+). Its pathway is amino-acid biosynthesis; L-arginine biosynthesis; carbamoyl phosphate from bicarbonate: step 1/1. Large subunit of the arginine-specific carbamoyl phosphate synthase (CPSase). CPSase catalyzes the formation of carbamoyl phosphate from the ammonia moiety of glutamine, hydrogencarbonate, and phosphate donated by ATP, the first step of the arginine biosynthetic pathway. The large subunit (synthetase) binds the substrates ammonia (free or transferred from glutamine from the small subunit), hydrogencarbonate and ATP and carries out an ATP-coupled ligase reaction, activating hydrogencarbonate by forming carboxy phosphate which reacts with ammonia to form carbamoyl phosphate. The chain is Carbamoyl phosphate synthase arginine-specific large chain, mitochondrial (arg4) from Schizosaccharomyces pombe (strain 972 / ATCC 24843) (Fission yeast).